Reading from the N-terminus, the 947-residue chain is Protein translocase subunit SecA 1 (947 aa).

Residues glutamine 83, 101–105, and aspartate 490 each bind ATP; that span reads GEGKT. The tract at residues 860 to 947 is disordered; it reads AKAQEQTGQG…KTSKPTRRRG (88 aa). Residues 925-934 are compositionally biased toward basic and acidic residues; that stretch reads TRRERREAAR. Over residues 935–947 the composition is skewed to basic residues; sequence KQAKTSKPTRRRG.

Belongs to the SecA family. Monomer and homodimer. Part of the essential Sec protein translocation apparatus which comprises SecA, SecYEG and auxiliary proteins SecDF. Other proteins may also be involved.

It localises to the cell membrane. The protein localises to the cytoplasm. It catalyses the reaction ATP + H2O + cellular proteinSide 1 = ADP + phosphate + cellular proteinSide 2.. In terms of biological role, part of the Sec protein translocase complex. Interacts with the SecYEG preprotein conducting channel. Has a central role in coupling the hydrolysis of ATP to the transfer of proteins into and across the cell membrane, serving as an ATP-driven molecular motor driving the stepwise translocation of polypeptide chains across the membrane. In Mycobacterium sp. (strain JLS), this protein is Protein translocase subunit SecA 1.